Reading from the N-terminus, the 333-residue chain is G-protein coupled receptor 146 (333 aa).

Residues Met1–Glu21 are Extracellular-facing. A glycan (N-linked (GlcNAc...) asparagine) is linked at Asn8. The helical transmembrane segment at Phe22–Leu42 threads the bilayer. The Cytoplasmic segment spans residues Cys43–Tyr65. The helical transmembrane segment at Phe66–Gly86 threads the bilayer. Residues Pro87–Tyr102 are Extracellular-facing. A helical transmembrane segment spans residues Ile103–Leu123. Residues Ser124–His146 are Cytoplasmic-facing. A helical membrane pass occupies residues Val147–Ile167. The Extracellular portion of the chain corresponds to Cys168 to Ala189. Residues Ile190–Ile210 form a helical membrane-spanning segment. Residues Leu211 to Leu234 are Cytoplasmic-facing. A helical membrane pass occupies residues Leu235–Val255. Residues Asn256–Gln275 lie on the Extracellular side of the membrane. The helical transmembrane segment at Phe276–His296 threads the bilayer. The Cytoplasmic portion of the chain corresponds to Arg297–Thr333.

This sequence belongs to the G-protein coupled receptor 1 family.

The protein localises to the cell membrane. Its function is as follows. G-protein coupled receptor required for the regulation of plasma cholesterol levels. The polypeptide is G-protein coupled receptor 146 (gpr146) (Xenopus laevis (African clawed frog)).